We begin with the raw amino-acid sequence, 147 residues long: Putative 2'-deoxynucleoside 5'-phosphate N-hydrolase 1 (147 aa).

Residues Tyr-10–Arg-16, Tyr-25, His-42, Glu-90, and Ser-114–Met-116 each bind substrate.

Belongs to the 2'-deoxynucleoside 5'-phosphate N-hydrolase 1 family. As to quaternary structure, monomer and homodimer.

The protein localises to the cytoplasm. The protein resides in the nucleus. It catalyses the reaction a pyrimidine 2'-deoxyribonucleoside 5'-phosphate + H2O = a pyrimidine nucleobase + 2-deoxy-D-ribose 5-phosphate. The enzyme catalyses a purine 2'-deoxyribonucleoside 5'-phosphate + H2O = a purine nucleobase + 2-deoxy-D-ribose 5-phosphate. Its function is as follows. Catalyzes the cleavage of the N-glycosidic bond of deoxyribonucleoside 5'-monophosphates to yield deoxyribose 5-phosphate and a purine or pyrimidine base. The polypeptide is Putative 2'-deoxynucleoside 5'-phosphate N-hydrolase 1 (Nematostella vectensis (Starlet sea anemone)).